A 277-amino-acid chain; its full sequence is Thymidylate synthase (277 aa).

Position 21 (arginine 21) interacts with dUMP. A (6R)-5,10-methylene-5,6,7,8-tetrahydrofolate-binding site is contributed by histidine 51. 126–127 (RR) serves as a coordination point for dUMP. Cysteine 159 serves as the catalytic Nucleophile. Residues 179 to 182 (RSAD), asparagine 190, and 220 to 222 (HLY) each bind dUMP. Aspartate 182 contacts (6R)-5,10-methylene-5,6,7,8-tetrahydrofolate. Serine 276 provides a ligand contact to (6R)-5,10-methylene-5,6,7,8-tetrahydrofolate.

It belongs to the thymidylate synthase family. Bacterial-type ThyA subfamily. In terms of assembly, homodimer.

It localises to the cytoplasm. It catalyses the reaction dUMP + (6R)-5,10-methylene-5,6,7,8-tetrahydrofolate = 7,8-dihydrofolate + dTMP. It functions in the pathway pyrimidine metabolism; dTTP biosynthesis. Its function is as follows. Catalyzes the reductive methylation of 2'-deoxyuridine-5'-monophosphate (dUMP) to 2'-deoxythymidine-5'-monophosphate (dTMP) while utilizing 5,10-methylenetetrahydrofolate (mTHF) as the methyl donor and reductant in the reaction, yielding dihydrofolate (DHF) as a by-product. This enzymatic reaction provides an intracellular de novo source of dTMP, an essential precursor for DNA biosynthesis. The protein is Thymidylate synthase of Saccharophagus degradans (strain 2-40 / ATCC 43961 / DSM 17024).